The sequence spans 432 residues: Adenylosuccinate synthetase (432 aa).

GTP-binding positions include 13 to 19 (GDEGKGK) and 41 to 43 (GHT). Aspartate 14 functions as the Proton acceptor in the catalytic mechanism. 2 residues coordinate Mg(2+): aspartate 14 and glycine 41. IMP contacts are provided by residues 14-17 (DEGK), 39-42 (NAGH), threonine 130, arginine 144, glutamine 225, threonine 240, and arginine 304. Residue histidine 42 is the Proton donor of the active site. 300 to 306 (ATTGRRR) provides a ligand contact to substrate. GTP-binding positions include arginine 306, 332–334 (KLD), and 415–417 (STG).

It belongs to the adenylosuccinate synthetase family. As to quaternary structure, homodimer. It depends on Mg(2+) as a cofactor.

Its subcellular location is the cytoplasm. The enzyme catalyses IMP + L-aspartate + GTP = N(6)-(1,2-dicarboxyethyl)-AMP + GDP + phosphate + 2 H(+). It participates in purine metabolism; AMP biosynthesis via de novo pathway; AMP from IMP: step 1/2. Plays an important role in the de novo pathway of purine nucleotide biosynthesis. Catalyzes the first committed step in the biosynthesis of AMP from IMP. The chain is Adenylosuccinate synthetase from Shigella flexneri serotype 5b (strain 8401).